A 935-amino-acid chain; its full sequence is 2-oxoglutarate dehydrogenase E1 component (935 aa).

The protein belongs to the alpha-ketoglutarate dehydrogenase family. As to quaternary structure, homodimer. Part of the 2-oxoglutarate dehydrogenase (OGDH) complex composed of E1 (2-oxoglutarate dehydrogenase), E2 (dihydrolipoamide succinyltransferase) and E3 (dihydrolipoamide dehydrogenase); the complex contains multiple copies of the three enzymatic components (E1, E2 and E3). Thiamine diphosphate is required as a cofactor.

The catalysed reaction is N(6)-[(R)-lipoyl]-L-lysyl-[protein] + 2-oxoglutarate + H(+) = N(6)-[(R)-S(8)-succinyldihydrolipoyl]-L-lysyl-[protein] + CO2. In terms of biological role, E1 component of the 2-oxoglutarate dehydrogenase (OGDH) complex which catalyzes the decarboxylation of 2-oxoglutarate, the first step in the conversion of 2-oxoglutarate to succinyl-CoA and CO(2). In Haemophilus influenzae (strain ATCC 51907 / DSM 11121 / KW20 / Rd), this protein is 2-oxoglutarate dehydrogenase E1 component (sucA).